The following is a 444-amino-acid chain: tRNA modification GTPase MnmE (444 aa).

(6S)-5-formyl-5,6,7,8-tetrahydrofolate is bound by residues Arg-23, Glu-82, and Lys-121. The 150-residue stretch at 216–365 (GTSIVLAGLP…LKQALQKWLN (150 aa)) folds into the TrmE-type G domain. Asn-226 contacts K(+). Residues 226 to 231 (NAGKSS), 245 to 251 (TDIPGTT), and 270 to 273 (DSAG) each bind GTP. Residue Ser-230 coordinates Mg(2+). Residues Thr-245, Ile-247, and Thr-250 each coordinate K(+). Position 251 (Thr-251) interacts with Mg(2+). Lys-444 is a (6S)-5-formyl-5,6,7,8-tetrahydrofolate binding site.

It belongs to the TRAFAC class TrmE-Era-EngA-EngB-Septin-like GTPase superfamily. TrmE GTPase family. As to quaternary structure, homodimer. Heterotetramer of two MnmE and two MnmG subunits. Requires K(+) as cofactor.

It is found in the cytoplasm. Its function is as follows. Exhibits a very high intrinsic GTPase hydrolysis rate. Involved in the addition of a carboxymethylaminomethyl (cmnm) group at the wobble position (U34) of certain tRNAs, forming tRNA-cmnm(5)s(2)U34. The chain is tRNA modification GTPase MnmE from Chlamydia trachomatis serovar L2 (strain ATCC VR-902B / DSM 19102 / 434/Bu).